The chain runs to 267 residues: Undecaprenyl-diphosphatase (267 aa).

8 helical membrane passes run Met1 to Ile21, Gln39 to Phe59, Ser83 to Phe103, Leu111 to Val131, Ala149 to Ile169, Phe189 to Met209, Leu218 to Leu238, and Met246 to Leu266.

This sequence belongs to the UppP family.

It localises to the cell inner membrane. It carries out the reaction di-trans,octa-cis-undecaprenyl diphosphate + H2O = di-trans,octa-cis-undecaprenyl phosphate + phosphate + H(+). Functionally, catalyzes the dephosphorylation of undecaprenyl diphosphate (UPP). Confers resistance to bacitracin. The sequence is that of Undecaprenyl-diphosphatase from Aliivibrio fischeri (strain MJ11) (Vibrio fischeri).